A 114-amino-acid polypeptide reads, in one-letter code: Dolichyl-diphosphooligosaccharide--protein glycosyltransferase subunit DAD1 (114 aa).

At 1–30 the chain is on the cytoplasmic side; sequence MPKAAGDAKLLIQSLNKAYAATPTNLKIID. The helical transmembrane segment at 31–51 threads the bilayer; sequence LYVVFAVVTALLQVVYMGIVG. A topological domain (lumenal) is located at residue S52. Residues 53-73 form a helical membrane-spanning segment; that stretch reads FPFNSFLSGVLSCIGTAVLAV. At 74–93 the chain is on the cytoplasmic side; sequence CHRIQVNKDNKEFKDLAPER. A helical transmembrane segment spans residues 94–114; the sequence is AFADFVLCSLVLHLVIMNFLG.

This sequence belongs to the DAD/OST2 family. In terms of assembly, component of the oligosaccharyltransferase (OST) complex.

The protein resides in the endoplasmic reticulum membrane. The protein operates within protein modification; protein glycosylation. Functionally, subunit of the oligosaccharyl transferase (OST) complex that catalyzes the initial transfer of a defined glycan (Glc(3)Man(9)GlcNAc(2) in eukaryotes) from the lipid carrier dolichol-pyrophosphate to an asparagine residue within an Asn-X-Ser/Thr consensus motif in nascent polypeptide chains, the first step in protein N-glycosylation. N-glycosylation occurs cotranslationally and the complex associates with the Sec61 complex at the channel-forming translocon complex that mediates protein translocation across the endoplasmic reticulum (ER). All subunits are required for a maximal enzyme activity. The sequence is that of Dolichyl-diphosphooligosaccharide--protein glycosyltransferase subunit DAD1 (DAD1) from Hordeum vulgare (Barley).